A 561-amino-acid chain; its full sequence is Putative transport protein CKO_02260 (561 aa).

The next 5 helical transmembrane spans lie at 8 to 28, 32 to 52, 66 to 86, 94 to 114, and 158 to 178; these read LLNG…LCLG, LGSV…LLGQ, FMLF…SIFF, MLAL…GKLF, and NLSL…IVGA. RCK C-terminal domains are found at residues 200–288 and 292–373; these read RGLD…SFRN and VFDR…RIGF. 5 helical membrane passes run 383 to 403, 406 to 426, 447 to 467, 475 to 495, and 540 to 560; these read LLAF…TFQF, FSFG…LGFL, FGLM…IGNG, MLIA…LFGA, and AIAN…WPGL.

The protein belongs to the AAE transporter (TC 2.A.81) family. YbjL subfamily.

The protein localises to the cell membrane. This chain is Putative transport protein CKO_02260, found in Citrobacter koseri (strain ATCC BAA-895 / CDC 4225-83 / SGSC4696).